The following is a 493-amino-acid chain: Glutamyl-tRNA(Gln) amidotransferase subunit A (493 aa).

Catalysis depends on charge relay system residues Lys-78 and Ser-158. Residue Ser-182 is the Acyl-ester intermediate of the active site.

The protein belongs to the amidase family. GatA subfamily. In terms of assembly, heterotrimer of A, B and C subunits.

It catalyses the reaction L-glutamyl-tRNA(Gln) + L-glutamine + ATP + H2O = L-glutaminyl-tRNA(Gln) + L-glutamate + ADP + phosphate + H(+). Functionally, allows the formation of correctly charged Gln-tRNA(Gln) through the transamidation of misacylated Glu-tRNA(Gln) in organisms which lack glutaminyl-tRNA synthetase. The reaction takes place in the presence of glutamine and ATP through an activated gamma-phospho-Glu-tRNA(Gln). The sequence is that of Glutamyl-tRNA(Gln) amidotransferase subunit A from Rickettsia africae (strain ESF-5).